The following is a 163-amino-acid chain: Early nodulin-like protein 20 (163 aa).

An N-terminal signal peptide occupies residues 1-25 (MMGKYLWALVYVTVMILIIVVEVES). In terms of domain architecture, Phytocyanin spans 26–126 (SLHRVGGGRY…GMKLAITVLP (101 aa)). Residues Asn42, Asn63, Asn73, Asn88, and Asn135 are each glycosylated (N-linked (GlcNAc...) asparagine). An intrachain disulfide couples Cys80 to Cys114. A lipid anchor (GPI-anchor amidated serine) is attached at Ser138. Positions 139–163 (TTTPLIPPNAITAAILIFAFKALLL) are cleaved as a propeptide — removed in mature form.

It belongs to the early nodulin-like (ENODL) family.

It is found in the cell membrane. Its function is as follows. May act as a carbohydrate transporter. The protein is Early nodulin-like protein 20 of Arabidopsis thaliana (Mouse-ear cress).